Consider the following 887-residue polypeptide: Tubulin polyglutamylase TTLL7 (887 aa).

The disordered stretch occupies residues 1–21; that stretch reads MPSLPQEGVIQGPSPLDLNTE. The TTL domain maps to 38–390; the sequence is KGTITANVAG…RTSDKRRNLA (353 aa). ATP is bound by residues K160, 166 to 167, 188 to 191, and 201 to 203; these read MG, QEYI, and KFD. R227 lines the L-glutamate pocket. 249 to 250 serves as a coordination point for ATP; it reads TN. Y251, S252, and K271 together coordinate L-glutamate. Positions 336, 349, and 351 each coordinate Mg(2+). K367 is an L-glutamate binding site. The segment at 388–450 is c-MTBD region; sequence NLAKQKAEAQ…ISREEHENRH (63 aa). Disordered stretches follow at residues 519–621 and 651–676; these read MGKT…TRPF and LPHS…TKEQ. Residues 548-560 are compositionally biased toward low complexity; the sequence is SSDSSYDSSSSSS. Polar residues-rich tracts occupy residues 593-621 and 656-670; these read QQPS…TRPF and DACS…SLRQ.

This sequence belongs to the tubulin--tyrosine ligase family. In terms of assembly, interacts with both alpha- and beta-tubulin (via C-terminal tubulin tails). Requires Mg(2+) as cofactor. As to expression, highly expressed in the nervous system including spinal cord, thalamus, hippocampus, hypothalamus and cerebellum.

It is found in the cell projection. It localises to the cilium. Its subcellular location is the cytoplasm. The protein localises to the cytoskeleton. The protein resides in the cilium basal body. It is found in the dendrite. It localises to the perikaryon. The catalysed reaction is L-glutamyl-[protein] + L-glutamate + ATP = gamma-L-glutamyl-L-glutamyl-[protein] + ADP + phosphate + H(+). The enzyme catalyses (L-glutamyl)(n)-gamma-L-glutamyl-L-glutamyl-[protein] + L-glutamate + ATP = (L-glutamyl)(n+1)-gamma-L-glutamyl-L-glutamyl-[protein] + ADP + phosphate + H(+). Polyglutamylase which modifies tubulin, generating polyglutamate side chains of variable lengths on the gamma-carboxyl group of specific glutamate residues within the C-terminal tail of tubulin. Mediates both ATP-dependent initiation and elongation steps of the polyglutamylation reaction. Preferentially modifies the beta-tubulin tail over an alpha-tail. Competes with monoglycylase TTLL3 for modification site on beta-tubulin substrate, thereby creating an anticorrelation between glycylation and glutamylation reactions. Required for neurite growth; responsible for the strong increase in tubulin polyglutamylation during postnatal neuronal maturation. In Homo sapiens (Human), this protein is Tubulin polyglutamylase TTLL7.